The following is an 82-amino-acid chain: Sec-independent protein translocase protein TatA (82 aa).

A helical membrane pass occupies residues 1-21 (MLGFGPFELILIVVIIALLFG). Residues 36–47 (IKEFKQEMHEPS) are compositionally biased toward basic and acidic residues. Residues 36–82 (IKEFKQEMHEPSPPRPQVTDIPSQRLDPVTGAPVSTESTVPASDRRS) form a disordered region.

Belongs to the TatA/E family. As to quaternary structure, forms a complex with TatC.

It localises to the cell membrane. Functionally, part of the twin-arginine translocation (Tat) system that transports large folded proteins containing a characteristic twin-arginine motif in their signal peptide across membranes. TatA could form the protein-conducting channel of the Tat system. The polypeptide is Sec-independent protein translocase protein TatA (Deinococcus deserti (strain DSM 17065 / CIP 109153 / LMG 22923 / VCD115)).